A 109-amino-acid chain; its full sequence is MEVKAIHRGARISAQKTRLVADQIRGLPIERALNVLTFSPKKAAGIVKKVVESAIANAEHNEGADIDELKVKSIYVDKATSLKRFTARAKGRGNRIEKQTCHITVTLGN.

It belongs to the universal ribosomal protein uL22 family. In terms of assembly, part of the 50S ribosomal subunit.

In terms of biological role, this protein binds specifically to 23S rRNA; its binding is stimulated by other ribosomal proteins, e.g. L4, L17, and L20. It is important during the early stages of 50S assembly. It makes multiple contacts with different domains of the 23S rRNA in the assembled 50S subunit and ribosome. Its function is as follows. The globular domain of the protein is located near the polypeptide exit tunnel on the outside of the subunit, while an extended beta-hairpin is found that lines the wall of the exit tunnel in the center of the 70S ribosome. The sequence is that of Large ribosomal subunit protein uL22 from Cupriavidus taiwanensis (strain DSM 17343 / BCRC 17206 / CCUG 44338 / CIP 107171 / LMG 19424 / R1) (Ralstonia taiwanensis (strain LMG 19424)).